The primary structure comprises 64 residues: Enteric beta-defensin (64 aa).

The signal sequence occupies residues 1–26; that stretch reads MRLHHLLLTLLFLVLSAGSGFTQGIS. 3 disulfides stabilise this stretch: Cys31–Cys60, Cys38–Cys53, and Cys43–Cys61.

The protein belongs to the beta-defensin family. LAP/TAP subfamily. As to expression, inducibly expressed in enteric epithelial cells.

The protein resides in the secreted. Has antibacterial activity. This chain is Enteric beta-defensin (EBD), found in Bos taurus (Bovine).